Reading from the N-terminus, the 515-residue chain is MARMGLAGAAGRWWGLALGLTAFFLPGAHTQVVQVNDSMYGFIGTDVVLHCSFANPLPGVKITQVTWQKATNGSKQNVAIYNPAMGVSVLAPYRERVEFLRPSFTDGTIRLSRLELEDEGVYICEFATFPAGNRESQLNLTVMAKPTNWIEGTQAVLRAKKGKDDKVLVATCTSANGKPPSVVSWETHLKGEAEYQEIRNPNGTVTVISRYRLVPSREDHRQSLACIVNYHMDRFRESLTLNVQYEPEVTIEGFDGNWYLQRMDVKLTCKADANPPATEYHWTTLNGSLPKGVEAQNRTLFFRGPINYSMAGTYICEATNPIGTRSGQVEVNITEFPYTPSPPEHGRRAGQVPTAIIGGVVGSILLVLFVVGGIVVALCRRRHTFKGDYSTKKHVYGNGYSKAGIPQHHPPMAQNLQYPEDSDDEKKAGPLGGSSYEEEEEEEGGGGERKVGGPHPKYDEDAKRPYFTVDEAEARQDGYGDRTLGYQYDPEQLDLAENMVSQNDGSFISKKEWYV.

The N-terminal stretch at 1 to 30 is a signal peptide; sequence MARMGLAGAAGRWWGLALGLTAFFLPGAHT. Residues 31-141 form the Ig-like V-type domain; the sequence is QVVQVNDSMY…GNRESQLNLT (111 aa). At 31–355 the chain is on the extracellular side; that stretch reads QVVQVNDSMY…GRRAGQVPTA (325 aa). N36, N72, N139, N202, N286, N297, N307, and N332 each carry an N-linked (GlcNAc...) asparagine glycan. A disulfide bridge links C51 with C124. Ig-like C2-type domains follow at residues 145–243 and 247–334; these read KPTN…TLNV and PEVT…VNIT. 2 disulfides stabilise this stretch: C172-C226 and C269-C316. An interaction with FGFR region spans residues 282–299; sequence WTTLNGSLPKGVEAQNRT. Residues 356–376 traverse the membrane as a helical segment; sequence IIGGVVGSILLVLFVVGGIVV. Residues 377–515 lie on the Cytoplasmic side of the membrane; the sequence is ALCRRRHTFK…SFISKKEWYV (139 aa). Positions 400 to 486 are disordered; that stretch reads YSKAGIPQHH…DGYGDRTLGY (87 aa). A phosphoserine mark is found at S422, S434, and S435. The residue at position 436 (Y436) is a Phosphotyrosine. Residues 436 to 445 are compositionally biased toward acidic residues; sequence YEEEEEEEGG. The span at 446–464 shows a compositional bias: basic and acidic residues; the sequence is GGERKVGGPHPKYDEDAKR. S509 carries the post-translational modification Phosphoserine.

The protein belongs to the nectin family. (Microbial infection) Interacts with herpes pseudorabies virus/PRV envelope glycoprotein D.

The protein resides in the cell membrane. It localises to the cell junction. Its subcellular location is the adherens junction. It is found in the presynaptic cell membrane. Its function is as follows. (Microbial infection) Acts as a receptor for herpes simplex virus 1/HHV-1, herpes simplex virus 2/HHV-2, and pseudorabies virus/PRV. This Sus scrofa (Pig) protein is Nectin-1.